Reading from the N-terminus, the 459-residue chain is WPP domain-interacting protein 3 (459 aa).

Positions 1-17 are enriched in polar residues; it reads MNESVPDSVEDNGNSVP. Residues 1 to 78 are disordered; it reads MNESVPDSVE…GPVRDEAAPV (78 aa). Over residues 52-66 the composition is skewed to basic residues; the sequence is STRKGFGLKKWRRIK. 2 short sequence motifs (nuclear localization signal) span residues 60 to 61 and 63 to 64; these read KK and RR. Basic and acidic residues predominate over residues 67–78; the sequence is RDGPVRDEAAPV. Residues 86–87 carry the Nuclear localization signal 3 motif; that stretch reads KR. Disordered stretches follow at residues 240-266 and 308-330; these read KEEV…NNNH and TDEL…TSSG. Over residues 251-266 the composition is skewed to basic and acidic residues; that stretch reads NGNKEDDGESKKNNNH. The segment covering 308-319 has biased composition (polar residues); that stretch reads TDELSSDQPSHQ. A coiled-coil region spans residues 331-375; the sequence is SKALILKEKVKLLEHKLEEARAALEAKEARIQELENSKIESELEC. Positions 426–459 constitute a KASH domain; it reads KLGFYILTQLILLVSILRFLVLQFSPASRLVIPT. The helical transmembrane segment at 427-447 threads the bilayer; that stretch reads LGFYILTQLILLVSILRFLVL.

As to quaternary structure, component of Ran complexes at least composed of WIT1 or WIT2, RANGAP1 or RANGAP2, and WIP1 or WIP2 or WIP3. Interacts with RANGAP1, WPP1/MAF1, and WPP2/MAF2. Interacts with SUN1 and SUN2. Core component of the LINC complex which is composed of inner nuclear membrane SUN domain-containing proteins coupled to outer nuclear membrane WIP and WIT proteins. The LINC complex also involves nucleoskeletal proteins CRWN/LINC and possibly KAKU4 and the cytoskeletal myosin KAKU1. Interacts with WIT2. Expressed in seedlings, roots, stems, leaves, and flowers.

It localises to the nucleus envelope. Its subcellular location is the nucleus membrane. Functionally, mediates and enhances the nuclear envelope docking of RANGAP proteins mediated by WIT1 and WIT2 in the undifferentiated cells of root tips. As component of the SUN-WIP-WIT2-KAKU1 complex, mediates the transfer of cytoplasmic forces to the nuclear envelope (NE), leading to nuclear shape changes. This Arabidopsis thaliana (Mouse-ear cress) protein is WPP domain-interacting protein 3 (WIP3).